The following is a 224-amino-acid chain: MEIFLSIAINILIFWIGYLIGSLNASIIVGKLFYKKDVREFHSKNAGATNSLRVFGYKVAIVILFIDIFKVVFATYFVRIVFPFVFSPKLYFYIPLIAGLAAQIGQAYPIYFKFRGGKGVAATVGLLISINVLLWPIAGVFFFLLLFKTKYVSLSSLLTTLIMIGFISIPWMSQGVLSYATSGFGQFWVNIIIYLFAAALIFWKHRENIKRLLSKTENKMKFKK.

6 consecutive transmembrane segments (helical) span residues isoleucine 3–leucine 23, valine 54–alanine 74, leucine 90–phenylalanine 112, leucine 127–phenylalanine 147, valine 152–methionine 172, and glycine 183–tryptophan 203.

Belongs to the PlsY family. As to quaternary structure, probably interacts with PlsX.

It is found in the cell membrane. The enzyme catalyses an acyl phosphate + sn-glycerol 3-phosphate = a 1-acyl-sn-glycero-3-phosphate + phosphate. Its pathway is lipid metabolism; phospholipid metabolism. In terms of biological role, catalyzes the transfer of an acyl group from acyl-phosphate (acyl-PO(4)) to glycerol-3-phosphate (G3P) to form lysophosphatidic acid (LPA). This enzyme utilizes acyl-phosphate as fatty acyl donor, but not acyl-CoA or acyl-ACP. This chain is Glycerol-3-phosphate acyltransferase, found in Mycoplasmopsis synoviae (strain 53) (Mycoplasma synoviae).